Here is a 172-residue protein sequence, read N- to C-terminus: Large ribosomal subunit protein bL17 (172 aa).

Over residues 140–160 (LKAEAKAKREEKKPAKKEEKP) the composition is skewed to basic and acidic residues. The segment at 140 to 172 (LKAEAKAKREEKKPAKKEEKPKKAKKEKAAASN) is disordered.

This sequence belongs to the bacterial ribosomal protein bL17 family. Part of the 50S ribosomal subunit. Contacts protein L32.

The sequence is that of Large ribosomal subunit protein bL17 from Leptospira biflexa serovar Patoc (strain Patoc 1 / Ames).